Reading from the N-terminus, the 217-residue chain is Probable glutathione S-transferase DHAR4 (217 aa).

K8 and D19 together coordinate glutathione. L-ascorbate-binding residues include K8 and D19. Positions 10-85 (ASGAPDVLGD…DLIVGIIEEK (76 aa)) constitute a GST N-terminal domain. C20 functions as the Nucleophile in the catalytic mechanism. Residues 20–25 (CPFGQR) carry the Glutathione-binding motif. Positions 47, 75, 164, and 211 each coordinate glutathione. The region spanning 86–217 (YPEPSLVTFP…IASWAPKLDV (132 aa)) is the GST C-terminal domain. K214 is a binding site for L-ascorbate.

Belongs to the GST superfamily. DHAR family. As to quaternary structure, monomer.

Its subcellular location is the cytoplasm. The protein resides in the cytosol. It carries out the reaction RX + glutathione = an S-substituted glutathione + a halide anion + H(+). The catalysed reaction is L-dehydroascorbate + 2 glutathione = glutathione disulfide + L-ascorbate. In terms of biological role, exhibits glutathione-dependent thiol transferase and dehydroascorbate (DHA) reductase activities. This chain is Probable glutathione S-transferase DHAR4 (DHAR4), found in Arabidopsis thaliana (Mouse-ear cress).